The chain runs to 134 residues: Large ribosomal subunit protein bL20 (134 aa).

Belongs to the bacterial ribosomal protein bL20 family.

In terms of biological role, binds directly to 23S ribosomal RNA and is necessary for the in vitro assembly process of the 50S ribosomal subunit. It is not involved in the protein synthesizing functions of that subunit. The polypeptide is Large ribosomal subunit protein bL20 (Sinorhizobium medicae (strain WSM419) (Ensifer medicae)).